Here is a 314-residue protein sequence, read N- to C-terminus: Phosphoribosylaminoimidazole-succinocarboxamide synthase (314 aa).

The protein belongs to the SAICAR synthetase family.

The catalysed reaction is 5-amino-1-(5-phospho-D-ribosyl)imidazole-4-carboxylate + L-aspartate + ATP = (2S)-2-[5-amino-1-(5-phospho-beta-D-ribosyl)imidazole-4-carboxamido]succinate + ADP + phosphate + 2 H(+). It functions in the pathway purine metabolism; IMP biosynthesis via de novo pathway; 5-amino-1-(5-phospho-D-ribosyl)imidazole-4-carboxamide from 5-amino-1-(5-phospho-D-ribosyl)imidazole-4-carboxylate: step 1/2. This is Phosphoribosylaminoimidazole-succinocarboxamide synthase from Bacteroides fragilis (strain ATCC 25285 / DSM 2151 / CCUG 4856 / JCM 11019 / LMG 10263 / NCTC 9343 / Onslow / VPI 2553 / EN-2).